Consider the following 313-residue polypeptide: tRNA pseudouridine synthase B (313 aa).

Asp42 functions as the Nucleophile in the catalytic mechanism.

It belongs to the pseudouridine synthase TruB family. Type 1 subfamily.

It carries out the reaction uridine(55) in tRNA = pseudouridine(55) in tRNA. Functionally, responsible for synthesis of pseudouridine from uracil-55 in the psi GC loop of transfer RNAs. The protein is tRNA pseudouridine synthase B of Prochlorococcus marinus (strain SARG / CCMP1375 / SS120).